Reading from the N-terminus, the 276-residue chain is Large ribosomal subunit protein uL2 (276 aa).

The segment at 224 to 276 (VAMNPVDHPHGGGEGKTGEGRVPVSPWGTPTKGYRTRRNKRTTSMIVQRRQKR) is disordered. Over residues 230-242 (DHPHGGGEGKTGE) the composition is skewed to basic and acidic residues.

Belongs to the universal ribosomal protein uL2 family. In terms of assembly, part of the 50S ribosomal subunit. Forms a bridge to the 30S subunit in the 70S ribosome.

Its function is as follows. One of the primary rRNA binding proteins. Required for association of the 30S and 50S subunits to form the 70S ribosome, for tRNA binding and peptide bond formation. It has been suggested to have peptidyltransferase activity; this is somewhat controversial. Makes several contacts with the 16S rRNA in the 70S ribosome. This chain is Large ribosomal subunit protein uL2, found in Polynucleobacter asymbioticus (strain DSM 18221 / CIP 109841 / QLW-P1DMWA-1) (Polynucleobacter necessarius subsp. asymbioticus).